We begin with the raw amino-acid sequence, 488 residues long: GTPase Der (488 aa).

EngA-type G domains follow at residues 3 to 166 and 201 to 374; these read PVVA…VSDG and IKLA…QCAT. Residues 9–16, 56–60, 118–121, 207–214, 254–258, and 319–322 each bind GTP; these read GRPNVGKS, DTGGI, NKTD, DTAGV, and NKWD. One can recognise a KH-like domain in the interval 375–459; the sequence is KRVSTALLTR…PIRIQFNEGA (85 aa).

It belongs to the TRAFAC class TrmE-Era-EngA-EngB-Septin-like GTPase superfamily. EngA (Der) GTPase family. In terms of assembly, associates with the 50S ribosomal subunit.

In terms of biological role, GTPase that plays an essential role in the late steps of ribosome biogenesis. The chain is GTPase Der from Sodalis glossinidius (strain morsitans).